We begin with the raw amino-acid sequence, 309 residues long: MSEINISAAAVKELREKTGAGMMDCKKALIETSGNFEEAIDFLRKKGLAAAAKKAGRIASEGLTAAKVDGLTGVVVEVNSETDFVARNEQFQDLVKDIANLAVIAKTIDTLKTSKMQSGKSVEEEIIENIATIGENLTLRRMDILEISEGAIGSYVHNEVVPNLGKISVLVGLESNAKDKTKLEALAKQVAVHVAGNNPQSIDDSSLDQALVERERKVFFEKSKEEGKPDNIIEKMVEGRIRKFFSEVVLLQQNFLFEPKLTVAEVIKNAEKELGAEIKIAKFIRYELGEGIEHEEKNFADEVAAITQG.

An involved in Mg(2+) ion dislocation from EF-Tu region spans residues 82 to 85; the sequence is TDFV.

Belongs to the EF-Ts family.

It localises to the cytoplasm. Associates with the EF-Tu.GDP complex and induces the exchange of GDP to GTP. It remains bound to the aminoacyl-tRNA.EF-Tu.GTP complex up to the GTP hydrolysis stage on the ribosome. The sequence is that of Elongation factor Ts from Rickettsia felis (strain ATCC VR-1525 / URRWXCal2) (Rickettsia azadi).